A 103-amino-acid polypeptide reads, in one-letter code: uncharacterized protein (103 aa).

Residues 1 to 21 (MTGFKVSSFFYILALSRFFNA) form the signal peptide.

This is an uncharacterized protein from Saccharomyces cerevisiae (strain ATCC 204508 / S288c) (Baker's yeast).